A 260-amino-acid chain; its full sequence is Ribonuclease HII (260 aa).

The RNase H type-2 domain occupies 71–259 (ELVAGVDEVG…VHDAIVNKKN (189 aa)). 3 residues coordinate a divalent metal cation: aspartate 77, glutamate 78, and aspartate 169.

Belongs to the RNase HII family. The cofactor is Mn(2+). Requires Mg(2+) as cofactor.

The protein localises to the cytoplasm. It carries out the reaction Endonucleolytic cleavage to 5'-phosphomonoester.. Functionally, endonuclease that specifically degrades the RNA of RNA-DNA hybrids. The polypeptide is Ribonuclease HII (Leuconostoc citreum (strain KM20)).